Consider the following 247-residue polypeptide: uncharacterized protein (247 aa).

This sequence to M.pneumoniae MPN_635 N-terminal region.

This is an uncharacterized protein from Mycoplasma pneumoniae (strain ATCC 29342 / M129 / Subtype 1) (Mycoplasmoides pneumoniae).